A 226-amino-acid polypeptide reads, in one-letter code: Protein-L-isoaspartate O-methyltransferase (226 aa).

S75 is a catalytic residue.

This sequence belongs to the methyltransferase superfamily. L-isoaspartyl/D-aspartyl protein methyltransferase family.

Its subcellular location is the cytoplasm. It catalyses the reaction [protein]-L-isoaspartate + S-adenosyl-L-methionine = [protein]-L-isoaspartate alpha-methyl ester + S-adenosyl-L-homocysteine. Catalyzes the methyl esterification of L-isoaspartyl residues in peptides and proteins that result from spontaneous decomposition of normal L-aspartyl and L-asparaginyl residues. It plays a role in the repair and/or degradation of damaged proteins. The sequence is that of Protein-L-isoaspartate O-methyltransferase from Lawsonia intracellularis (strain PHE/MN1-00).